A 602-amino-acid chain; its full sequence is NADH-quinone oxidoreductase subunit C/D (602 aa).

The NADH dehydrogenase I subunit C stretch occupies residues 1 to 192 (MVNNMTDLTA…DPFELTKAKQ (192 aa)). The segment at 216-602 (DFMFLNLGPN…IDFVMSDVDR (387 aa)) is NADH dehydrogenase I subunit D.

It in the N-terminal section; belongs to the complex I 30 kDa subunit family. The protein in the C-terminal section; belongs to the complex I 49 kDa subunit family. In terms of assembly, NDH-1 is composed of 13 different subunits. Subunits NuoB, CD, E, F, and G constitute the peripheral sector of the complex.

The protein localises to the cell inner membrane. It catalyses the reaction a quinone + NADH + 5 H(+)(in) = a quinol + NAD(+) + 4 H(+)(out). In terms of biological role, NDH-1 shuttles electrons from NADH, via FMN and iron-sulfur (Fe-S) centers, to quinones in the respiratory chain. The immediate electron acceptor for the enzyme in this species is believed to be ubiquinone. Couples the redox reaction to proton translocation (for every two electrons transferred, four hydrogen ions are translocated across the cytoplasmic membrane), and thus conserves the redox energy in a proton gradient. The protein is NADH-quinone oxidoreductase subunit C/D of Klebsiella pneumoniae (strain 342).